The primary structure comprises 268 residues: MGPWTLLLLHLPLVVSMLPAPTNVSIVSFNLEHTLTWLPGPETPDNTHFTVQSLRKNSWQLVKGCARLKTRQSCDLTNTFKDPFYHYKARVQAITTTQKSNRSLSMLFYPLTDTLLGPPVVSVSGCGNCPLLQVTPPTSRGLQRSLSPTQLYYRQFTCKVRRTRDGSQFSMWVTSTEKTVIGYLEPGAEYCVTVTPSTSFNPHSVPSEPHCAFTSPTAANTVPVVLSVLCAFSLLVVLLCGIVVYSGRLLCMHKPLPKTLSSVPLCGG.

The N-terminal stretch at 1 to 16 is a signal peptide; the sequence is MGPWTLLLLHLPLVVS. Topologically, residues 17–223 are extracellular; sequence MLPAPTNVSI…TSPTAANTVP (207 aa). Fibronectin type-III domains follow at residues 18 to 114 and 115 to 217; these read LPAP…LTDT and LLGP…TSPT. Disulfide bonds link Cys-65–Cys-74 and Cys-191–Cys-211. A helical transmembrane segment spans residues 224-244; the sequence is VVLSVLCAFSLLVVLLCGIVV. Residues 245 to 268 lie on the Cytoplasmic side of the membrane; it reads YSGRLLCMHKPLPKTLSSVPLCGG.

Belongs to the type II cytokine receptor family. Heterodimer with IFNAR1; forming the receptor for type I interferon.

It is found in the cell membrane. It localises to the cytoplasm. Functionally, together with IFNAR1, forms the heterodimeric receptor for type I interferons (including interferons alpha, beta, epsilon, omega and kappa). Type I interferon binding activates the JAK-STAT signaling cascade, resulting in transcriptional activation or repression of interferon-regulated genes that encode the effectors of the interferon response. Mechanistically, type I interferon-binding brings the IFNAR1 and IFNAR2 subunits into close proximity with one another, driving their associated Janus kinases (JAKs) (TYK2 bound to IFNAR1 and JAK1 bound to IFNAR2) to cross-phosphorylate one another. The activated kinases phosphorylate specific tyrosine residues on the intracellular domains of IFNAR1 and IFNAR2, forming docking sites for the STAT transcription factors (STAT1, STAT2 and STAT). STAT proteins are then phosphorylated by the JAKs, promoting their translocation into the nucleus to regulate expression of interferon-regulated genes. The chain is Interferon alpha/beta receptor 2 from Oncorhynchus mykiss (Rainbow trout).